The chain runs to 305 residues: Homoserine O-acetyltransferase (305 aa).

Cys-142 (acyl-thioester intermediate) is an active-site residue. Residues Lys-163 and Ser-192 each coordinate substrate. Residue His-235 is the Proton acceptor of the active site. Glu-237 is an active-site residue. Arg-249 contacts substrate.

It belongs to the MetA family.

The protein localises to the cytoplasm. It catalyses the reaction L-homoserine + acetyl-CoA = O-acetyl-L-homoserine + CoA. The protein operates within amino-acid biosynthesis; L-methionine biosynthesis via de novo pathway; O-acetyl-L-homoserine from L-homoserine: step 1/1. Its function is as follows. Transfers an acetyl group from acetyl-CoA to L-homoserine, forming acetyl-L-homoserine. The sequence is that of Homoserine O-acetyltransferase from Cereibacter sphaeroides (strain ATCC 17025 / ATH 2.4.3) (Rhodobacter sphaeroides).